A 419-amino-acid polypeptide reads, in one-letter code: D-inositol 3-phosphate glycosyltransferase (419 aa).

His-9 is a 1D-myo-inositol 3-phosphate binding site. UDP-N-acetyl-alpha-D-glucosamine-binding positions include 15–16 (QP) and Gly-23. 1D-myo-inositol 3-phosphate-binding positions include 20-25 (DAGGMN), Lys-78, Tyr-110, Thr-134, and Arg-154. UDP-N-acetyl-alpha-D-glucosamine-binding residues include Arg-231, Lys-236, and Arg-295. Mg(2+) contacts are provided by Tyr-304, Arg-305, and Ala-307. UDP-N-acetyl-alpha-D-glucosamine is bound by residues Glu-317 and Glu-325. Residue Thr-331 coordinates Mg(2+).

Belongs to the glycosyltransferase group 1 family. MshA subfamily. In terms of assembly, homodimer.

The catalysed reaction is 1D-myo-inositol 3-phosphate + UDP-N-acetyl-alpha-D-glucosamine = 1D-myo-inositol 2-acetamido-2-deoxy-alpha-D-glucopyranoside 3-phosphate + UDP + H(+). Its function is as follows. Catalyzes the transfer of a N-acetyl-glucosamine moiety to 1D-myo-inositol 3-phosphate to produce 1D-myo-inositol 2-acetamido-2-deoxy-glucopyranoside 3-phosphate in the mycothiol biosynthesis pathway. The protein is D-inositol 3-phosphate glycosyltransferase of Corynebacterium jeikeium (strain K411).